A 428-amino-acid chain; its full sequence is Cholecystokinin receptor type A (428 aa).

The Extracellular segment spans residues 1 to 41 (MDVVDSLLVNGSNITPPCELGLENETLFCLDQPRPSKEWQP). 2 N-linked (GlcNAc...) asparagine glycosylation sites follow: Asn10 and Asn24. Cys18 and Cys29 form a disulfide bridge. A helical membrane pass occupies residues 42-67 (AVQILLYSLIFLLSVLGNTLVITVLI). Over 68–77 (RNKRMRTVTN) the chain is Cytoplasmic. Residues 78-104 (IFLLSLAVSDLMLCLFCMPFNLIPNLL) traverse the membrane as a helical segment. Topologically, residues 105-115 (KDFIFGSAVCK) are extracellular. Cys114 and Cys196 are joined by a disulfide. Residues 116 to 137 (TTTYFMGTSVSVSTFNLVAISL) traverse the membrane as a helical segment. The Cytoplasmic portion of the chain corresponds to 138–157 (ERYGAICKPLQSRVWQTKSH). The chain crosses the membrane as a helical span at residues 158-178 (ALKVIAATWCLSFTIMTPYPI). Over 179-210 (YSNLVPFTKNNNQTANMCRFLLPNDVMQQSWH) the chain is Extracellular. N-linked (GlcNAc...) asparagine glycosylation occurs at Asn190. A helical membrane pass occupies residues 211–234 (TFLLLILFLIPGIVMMVAYGLISL). Topologically, residues 235–313 (ELYQGIKFEA…NLMAKKRVIR (79 aa)) are cytoplasmic. The disordered stretch occupies residues 248–272 (KSAKERKPSTTSSGKYEDSDGCYLQ). Residues 314–334 (MLIVIVVLFFLCWMPIFSANA) form a helical membrane-spanning segment. Topologically, residues 335-349 (WRAYDTASAERRLSG) are extracellular. A helical transmembrane segment spans residues 350-373 (TPISFILLLSYTSSCVNPIIYCFM). The Cytoplasmic segment spans residues 374–428 (NKRFRLGFMATFPCCPNPGPPGARGEVGEEEEGGTTGASLSRFSYSHMSASVPPQ). The S-palmitoyl cysteine moiety is linked to residue Cys387. The tract at residues 394 to 428 (PGARGEVGEEEEGGTTGASLSRFSYSHMSASVPPQ) is disordered. Positions 411 to 422 (ASLSRFSYSHMS) are enriched in polar residues.

This sequence belongs to the G-protein coupled receptor 1 family.

The protein resides in the cell membrane. In terms of biological role, receptor for cholecystokinin. Mediates pancreatic growth and enzyme secretion, smooth muscle contraction of the gall bladder and stomach. Has a 1000-fold higher affinity for CCK rather than for gastrin. It modulates feeding and dopamine-induced behavior in the central and peripheral nervous system. This receptor mediates its action by association with G proteins that activate a phosphatidylinositol-calcium second messenger system. The chain is Cholecystokinin receptor type A (CCKAR) from Homo sapiens (Human).